The following is a 513-amino-acid chain: ATP synthase subunit alpha (513 aa).

169–176 (GDRQTGKT) is an ATP binding site.

Belongs to the ATPase alpha/beta chains family. As to quaternary structure, F-type ATPases have 2 components, CF(1) - the catalytic core - and CF(0) - the membrane proton channel. CF(1) has five subunits: alpha(3), beta(3), gamma(1), delta(1), epsilon(1). CF(0) has three main subunits: a(1), b(2) and c(9-12). The alpha and beta chains form an alternating ring which encloses part of the gamma chain. CF(1) is attached to CF(0) by a central stalk formed by the gamma and epsilon chains, while a peripheral stalk is formed by the delta and b chains.

The protein resides in the cell inner membrane. The enzyme catalyses ATP + H2O + 4 H(+)(in) = ADP + phosphate + 5 H(+)(out). Its function is as follows. Produces ATP from ADP in the presence of a proton gradient across the membrane. The alpha chain is a regulatory subunit. This is ATP synthase subunit alpha from Pseudoalteromonas translucida (strain TAC 125).